The sequence spans 208 residues: Frataxin, mitochondrial (208 aa).

A mitochondrion-targeting transit peptide spans 1 to 40; that stretch reads MWTFGRRAAAGLLPRTASRASAWVRNPRGRERIGTCGRRG.

Belongs to the frataxin family. In terms of assembly, component of the mitochondrial core iron-sulfur cluster (ISC) complex composed of NFS1, LYRM4, NDUFAB1, ISCU, FXN, and FDX2; this complex is a heterohexamer containing two copies of each monomer. Homodimer. Monomer (probable predominant form). Oligomer. Monomers and polymeric aggregates of &gt;1 MDa have been isolated from mitochondria. A small fraction of heterologous overexpressed recombinant frataxin forms high-molecular weight aggregates that incorporate iron. Interacts with LYRM4. Interacts (via ferrous form) with ISCU; the interaction is possible when both are bound to the dimeric form of the cysteine desulfurase complex (NFS1:LYRM4) and the interaction enhances FXN interaction to the dimeric form of the cysteine desulfurase complex (NFS1:LYRM4). Interacts with FECH; one iron-bound FXN monomer seems to interact with a FECH homodimer. Interacts with SDHA and SDHB. Interacts with ACO2; the interaction is dependent on citrate. Interacts with HSPA9. As to quaternary structure, interacts with ACO1. Interacts with ISCU (cytoplasmic form). Processed in two steps by mitochondrial processing peptidase (MPP). MPP first cleaves the precursor to intermediate form and subsequently converts the intermediate to yield frataxin mature form (frataxin(81-210)) which is the predominant form. The additional forms, frataxin(56-210) and frataxin(78-210), seem to be produced when the normal maturation process is impaired; their physiological relevance is unsure.

The protein resides in the mitochondrion. The protein localises to the cytoplasm. It is found in the cytosol. The enzyme catalyses 4 Fe(2+) + O2 + 4 H(+) = 4 Fe(3+) + 2 H2O. Functionally, functions as an activator of persulfide transfer to the scaffoding protein ISCU as component of the core iron-sulfur cluster (ISC) assembly complex and participates to the [2Fe-2S] cluster assembly. Accelerates sulfur transfer from NFS1 persulfide intermediate to ISCU and to small thiols such as L-cysteine and glutathione leading to persulfuration of these thiols and ultimately sulfide release. Binds ferrous ion and is released from FXN upon the addition of both L-cysteine and reduced FDX2 during [2Fe-2S] cluster assembly. The core iron-sulfur cluster (ISC) assembly complex is involved in the de novo synthesis of a [2Fe-2S] cluster, the first step of the mitochondrial iron-sulfur protein biogenesis. This process is initiated by the cysteine desulfurase complex (NFS1:LYRM4:NDUFAB1) that produces persulfide which is delivered on the scaffold protein ISCU in a FXN-dependent manner. Then this complex is stabilized by FDX2 which provides reducing equivalents to accomplish the [2Fe-2S] cluster assembly. Finally, the [2Fe-2S] cluster is transferred from ISCU to chaperone proteins, including HSCB, HSPA9 and GLRX5. May play a role in the protection against iron-catalyzed oxidative stress through its ability to catalyze the oxidation of Fe(2+) to Fe(3+); the oligomeric form but not the monomeric form has in vitro ferroxidase activity. May be able to store large amounts of iron in the form of a ferrihydrite mineral by oligomerization; however, the physiological relevance is unsure as reports are conflicting and the function has only been shown using heterologous overexpression systems. May function as an iron chaperone protein that protects the aconitase [4Fe-4S]2+ cluster from disassembly and promotes enzyme reactivation. May play a role as a high affinity iron binding partner for FECH that is capable of both delivering iron to ferrochelatase and mediating the terminal step in mitochondrial heme biosynthesis. In terms of biological role, modulates the RNA-binding activity of ACO1. May be involved in the cytoplasmic iron-sulfur protein biogenesis. May contribute to oxidative stress resistance and overall cell survival. In Rattus norvegicus (Rat), this protein is Frataxin, mitochondrial.